We begin with the raw amino-acid sequence, 86 residues long: Cell division topological specificity factor (86 aa).

This sequence belongs to the MinE family.

Its function is as follows. Prevents the cell division inhibition by proteins MinC and MinD at internal division sites while permitting inhibition at polar sites. This ensures cell division at the proper site by restricting the formation of a division septum at the midpoint of the long axis of the cell. The polypeptide is Cell division topological specificity factor (Polaromonas sp. (strain JS666 / ATCC BAA-500)).